Here is a 161-residue protein sequence, read N- to C-terminus: Early E3 17.7 kDa glycoprotein (161 aa).

N-linked (GlcNAc...) asparagine; by host glycosylation is found at Asn14 and Asn87. Residues 102–129 (IINPAIFLFLHVLTLVIVLAMAAEVIYN) form a helical membrane-spanning segment.

The protein localises to the host membrane. In Murine adenovirus A serotype 1 (MAdV-1), this protein is Early E3 17.7 kDa glycoprotein.